The primary structure comprises 129 residues: Natriuretic peptides B (129 aa).

The signal sequence occupies residues 1-26 (MDPQKALSRTLLLLLFLHLSLLGCRS). Cysteines 107 and 123 form a disulfide.

Belongs to the natriuretic peptide family. Post-translationally, the precursor molecule is proteolytically cleaved, possibly by FURIN or CORIN, to produce the active peptide. May undergo further proteolytic cleavage by various proteases such as DPP4, MME and possibly FAP, to give rise to a variety of shorter peptides. May be cleaved at Pro-99 by the prolyl endopeptidase FAP (seprase) activity (in vitro). May be degraded by IDE. During IDE degradation, the resulting products initially increase the activation of NPR1 and can also stimulate NPR2 to produce cGMP before the fragments are completely degraded and inactivated by IDE (in vitro).

The protein resides in the secreted. Its function is as follows. Cardiac hormone that plays a key role in mediating cardio-renal homeostasis. May also function as a paracrine antifibrotic factor in the heart. Acts by specifically binding and stimulating NPR1 to produce cGMP, which in turn activates effector proteins that drive various biological responses. Involved in regulating the extracellular fluid volume and maintaining the fluid-electrolyte balance through natriuresis, diuresis, vasorelaxation, and inhibition of renin and aldosterone secretion. Binds the clearance receptor NPR3. This is Natriuretic peptides B (NPPB) from Ovis aries (Sheep).